The sequence spans 117 residues: Large ribosomal subunit protein bL20 (117 aa).

Belongs to the bacterial ribosomal protein bL20 family.

Binds directly to 23S ribosomal RNA and is necessary for the in vitro assembly process of the 50S ribosomal subunit. It is not involved in the protein synthesizing functions of that subunit. The polypeptide is Large ribosomal subunit protein bL20 (Geobacter metallireducens (strain ATCC 53774 / DSM 7210 / GS-15)).